The following is a 258-amino-acid chain: Retron Ec83 putative HNH endonuclease (258 aa).

Functionally, putative HNH endonuclease component of antiviral defense system retron Ec83, composed of a non-coding RNA (ncRNA), a reverse transcriptase (RT), a probable ATPase and this protein. Expression of retron Ec78 confers protection against bacteriophage T2, T4 and T6. At multiplicity of infection (MOI) of 0.02 cultures slow growth when infected with T4 but do not collapse, at MOI 2 cultures enter growth stasis. The protein is Retron Ec83 putative HNH endonuclease of Escherichia coli.